A 491-amino-acid polypeptide reads, in one-letter code: Cytosol aminopeptidase (491 aa).

Residues Lys263 and Asp268 each coordinate Mn(2+). The active site involves Lys275. Positions 286, 345, and 347 each coordinate Mn(2+). Residue Arg349 is part of the active site.

It belongs to the peptidase M17 family. The cofactor is Mn(2+).

It localises to the cytoplasm. The catalysed reaction is Release of an N-terminal amino acid, Xaa-|-Yaa-, in which Xaa is preferably Leu, but may be other amino acids including Pro although not Arg or Lys, and Yaa may be Pro. Amino acid amides and methyl esters are also readily hydrolyzed, but rates on arylamides are exceedingly low.. The enzyme catalyses Release of an N-terminal amino acid, preferentially leucine, but not glutamic or aspartic acids.. In terms of biological role, presumably involved in the processing and regular turnover of intracellular proteins. Catalyzes the removal of unsubstituted N-terminal amino acids from various peptides. The sequence is that of Cytosol aminopeptidase (pepA) from Haemophilus influenzae (strain ATCC 51907 / DSM 11121 / KW20 / Rd).